Reading from the N-terminus, the 453-residue chain is Carbamoyl phosphate synthase arginine-specific small chain (453 aa).

The N-terminal 28 residues, 1-28, are a transit peptide targeting the mitochondrion; that stretch reads MFARVFKAMPARASALTSVNASIQARFM. One can recognise a Glutamine amidotransferase type-1 domain in the interval 219 to 406; sequence HVAVIDCGVK…IDSVKKYKAS (188 aa). Cys-295 functions as the Nucleophile in the catalytic mechanism. Residues His-379 and Glu-381 contribute to the active site.

It belongs to the CarA family. Heterodimer composed of 2 chains; the small (or glutamine) chain promotes the hydrolysis of glutamine to ammonia, which is used by the large (or ammonia) chain to synthesize carbamoyl phosphate.

It is found in the mitochondrion matrix. It catalyses the reaction hydrogencarbonate + L-glutamine + 2 ATP + H2O = carbamoyl phosphate + L-glutamate + 2 ADP + phosphate + 2 H(+). It carries out the reaction L-glutamine + H2O = L-glutamate + NH4(+). It functions in the pathway amino-acid biosynthesis; L-arginine biosynthesis; carbamoyl phosphate from bicarbonate: step 1/1. Functionally, small subunit of the arginine-specific carbamoyl phosphate synthase (CPSase). CPSase catalyzes the formation of carbamoyl phosphate from the ammonia moiety of glutamine, carbonate, and phosphate donated by ATP, the first step of the arginine biosynthetic pathway. The small subunit (glutamine amidotransferase) binds and cleaves glutamine to supply the large subunit with the substrate ammonia. The protein is Carbamoyl phosphate synthase arginine-specific small chain (cpa1) of Neosartorya fischeri (strain ATCC 1020 / DSM 3700 / CBS 544.65 / FGSC A1164 / JCM 1740 / NRRL 181 / WB 181) (Aspergillus fischerianus).